The sequence spans 274 residues: 4-hydroxy-tetrahydrodipicolinate reductase (274 aa).

Residues 11–16 (GGSGRM) and E37 contribute to the NAD(+) site. R38 is a binding site for NADP(+). Residues 101–103 (GTT) and 125–128 (APNM) contribute to the NAD(+) site. The Proton donor/acceptor role is filled by H158. Residue H159 participates in (S)-2,3,4,5-tetrahydrodipicolinate binding. K162 (proton donor) is an active-site residue. 168–169 (GT) is a (S)-2,3,4,5-tetrahydrodipicolinate binding site.

Belongs to the DapB family.

The protein localises to the cytoplasm. It carries out the reaction (S)-2,3,4,5-tetrahydrodipicolinate + NAD(+) + H2O = (2S,4S)-4-hydroxy-2,3,4,5-tetrahydrodipicolinate + NADH + H(+). It catalyses the reaction (S)-2,3,4,5-tetrahydrodipicolinate + NADP(+) + H2O = (2S,4S)-4-hydroxy-2,3,4,5-tetrahydrodipicolinate + NADPH + H(+). It participates in amino-acid biosynthesis; L-lysine biosynthesis via DAP pathway; (S)-tetrahydrodipicolinate from L-aspartate: step 4/4. In terms of biological role, catalyzes the conversion of 4-hydroxy-tetrahydrodipicolinate (HTPA) to tetrahydrodipicolinate. In Shewanella pealeana (strain ATCC 700345 / ANG-SQ1), this protein is 4-hydroxy-tetrahydrodipicolinate reductase.